The following is a 196-amino-acid chain: Transmembrane 4 L6 family member 5 (196 aa).

Over 1–9 (MCTGKCARF) the chain is Cytoplasmic. The helical transmembrane segment at 10-30 (VGLSLIPLSLVCIVANALLLV) threads the bilayer. The Extracellular portion of the chain corresponds to 31–45 (PNGQTTWTKDHLSLQ). The chain crosses the membrane as a helical span at residues 46-66 (VWLMAGFVGGGLMVLCPGISA). Residues 67-89 (VRAGGKGCCGAGCCGNRCRMLRS) lie on the Cytoplasmic side of the membrane. A helical membrane pass occupies residues 90 to 110 (VFCSAIGLLGAIYCLSVSGTG). The interval 90–196 (VFCSAIGLLG…DCRKKQGSSQ (107 aa)) is interaction with MTOR and CASTOR1. Topologically, residues 111–156 (LRIGPQCLMNGSWDYHFQDTAGSYLLNRTQWNLCVEPPDVVLWNVT) are extracellular. Asn120 carries an N-linked (GlcNAc...) asparagine glycan. An L-arginine-binding site is contributed by 123-128 (WDYHFQ). N-linked (GlcNAc...) asparagine glycans are attached at residues Asn137 and Asn154. A helical membrane pass occupies residues 157 to 177 (LFSLLVAASCLEILLCGVQLV). Residues 178–196 (NASIGVLCGDCRKKQGSSQ) are Cytoplasmic-facing.

This sequence belongs to the L6 tetraspanin family. In terms of assembly, interacts with MTOR; the interaction is positively regulated by arginine and is negatively regulated by leucine. Interacts with SLC38A9. Interacts with SLC7A1; the interaction is negatively regulated by arginine. Interacts with CASTOR1; the interaction is positively regulated by leucine and is negatively regulated by arginine.

It localises to the lysosome membrane. The protein localises to the cell membrane. Acts as a lysosomal membrane arginine sensor. Forms a complex with MTOR and SLC38A9 on lysosomal membranes in an arginine-regulated manner, leading to arginine efflux which enables the activation of mTORC1 which subsequently leads to RPS6KB1 and EIF4EBP1 phosphorylations. Facilitates cell cycle G1/S phase progression and the translocation of the CDK4-CCND1 complex into the nucleus. CDKN1B and RHOA/ROCK signaling activity are involved in TM4SF5-mediated acceleration of G1/S phase progression. This Bos taurus (Bovine) protein is Transmembrane 4 L6 family member 5 (TM4SF5).